We begin with the raw amino-acid sequence, 969 residues long: RNA polymerase-associated protein RapA (969 aa).

In terms of domain architecture, Helicase ATP-binding spans 164–334 (EVGRRHAPRV…FARLRLLDPD (171 aa)). An ATP-binding site is contributed by 177–184 (DEVGLGKT). The DEAH box signature appears at 280–283 (DEAH). A Helicase C-terminal domain is found at 492-679 (RVNWLIEKIQ…ESAKLNQSLK (188 aa)).

The protein belongs to the SNF2/RAD54 helicase family. RapA subfamily. As to quaternary structure, interacts with the RNAP. Has a higher affinity for the core RNAP than for the holoenzyme. Its ATPase activity is stimulated by binding to RNAP.

Functionally, transcription regulator that activates transcription by stimulating RNA polymerase (RNAP) recycling in case of stress conditions such as supercoiled DNA or high salt concentrations. Probably acts by releasing the RNAP, when it is trapped or immobilized on tightly supercoiled DNA. Does not activate transcription on linear DNA. Probably not involved in DNA repair. The protein is RNA polymerase-associated protein RapA of Vibrio atlanticus (strain LGP32) (Vibrio splendidus (strain Mel32)).